The primary structure comprises 158 residues: Xanthine-guanine phosphoribosyltransferase (158 aa).

5-phospho-alpha-D-ribose 1-diphosphate contacts are provided by residues 38-39 and 90-98; these read RG and DDLVDTGGT. D91 provides a ligand contact to Mg(2+). D94 and I137 together coordinate guanine. Positions 94 and 137 each coordinate xanthine. Residues 94–98 and 136–137 each bind GMP; these read DTGGT and WI.

It belongs to the purine/pyrimidine phosphoribosyltransferase family. XGPT subfamily. Homotetramer. Requires Mg(2+) as cofactor.

The protein resides in the cell inner membrane. The catalysed reaction is GMP + diphosphate = guanine + 5-phospho-alpha-D-ribose 1-diphosphate. It catalyses the reaction XMP + diphosphate = xanthine + 5-phospho-alpha-D-ribose 1-diphosphate. The enzyme catalyses IMP + diphosphate = hypoxanthine + 5-phospho-alpha-D-ribose 1-diphosphate. It participates in purine metabolism; GMP biosynthesis via salvage pathway; GMP from guanine: step 1/1. Its pathway is purine metabolism; XMP biosynthesis via salvage pathway; XMP from xanthine: step 1/1. Its function is as follows. Purine salvage pathway enzyme that catalyzes the transfer of the ribosyl-5-phosphate group from 5-phospho-alpha-D-ribose 1-diphosphate (PRPP) to the N9 position of the 6-oxopurines guanine and xanthine to form the corresponding ribonucleotides GMP (guanosine 5'-monophosphate) and XMP (xanthosine 5'-monophosphate), with the release of PPi. To a lesser extent, also acts on hypoxanthine. This is Xanthine-guanine phosphoribosyltransferase from Buchnera aphidicola subsp. Acyrthosiphon pisum (strain APS) (Acyrthosiphon pisum symbiotic bacterium).